A 246-amino-acid chain; its full sequence is Acetoacetate decarboxylase (246 aa).

Lys116 (schiff-base intermediate with acetoacetate) is an active-site residue.

Belongs to the ADC family.

The enzyme catalyses acetoacetate + H(+) = acetone + CO2. In terms of biological role, catalyzes the conversion of acetoacetate to acetone and carbon dioxide. In Burkholderia ambifaria (strain MC40-6), this protein is Acetoacetate decarboxylase.